The sequence spans 98 residues: Hainantoxin-XVII-2 (98 aa).

Positions 1–40 (MTTVGVSLFRRSPEKITMKIATFLGLSFLLIASYVLICEA) are cleaved as a signal peptide. A propeptide spanning residues 41–64 (QHPGFQELLILEENMRDPENSKER) is cleaved from the precursor. 2 disulfides stabilise this stretch: C66-C81 and C73-C85.

The protein belongs to the hainantoxin family. 17 subfamily. As to expression, expressed by the venom gland.

It is found in the secreted. Functionally, putative ion channel inhibitor. In Cyriopagopus hainanus (Chinese bird spider), this protein is Hainantoxin-XVII-2.